A 339-amino-acid chain; its full sequence is uncharacterized protein (339 aa).

The interval 1 to 24 is disordered; that stretch reads IQPARRHTKNTNMAKHTTKGTGHS. Positions 10–21 are enriched in polar residues; sequence NTNMAKHTTKGT.

It localises to the mitochondrion. This is an uncharacterized protein from Zea mays (Maize).